A 381-amino-acid chain; its full sequence is Arrestin homolog (381 aa).

The protein belongs to the arrestin family.

The sequence is that of Arrestin homolog from Heliothis virescens (Tobacco budworm moth).